Here is a 187-residue protein sequence, read N- to C-terminus: Threonylcarbamoyl-AMP synthase (187 aa).

Residues 4–187 form the YrdC-like domain; the sequence is TLTLSEAVTA…DARSGHILRL (184 aa).

This sequence belongs to the SUA5 family. TsaC subfamily.

Its subcellular location is the cytoplasm. It catalyses the reaction L-threonine + hydrogencarbonate + ATP = L-threonylcarbamoyladenylate + diphosphate + H2O. Required for the formation of a threonylcarbamoyl group on adenosine at position 37 (t(6)A37) in tRNAs that read codons beginning with adenine. Catalyzes the conversion of L-threonine, HCO(3)(-)/CO(2) and ATP to give threonylcarbamoyl-AMP (TC-AMP) as the acyladenylate intermediate, with the release of diphosphate. This chain is Threonylcarbamoyl-AMP synthase, found in Xylella fastidiosa (strain M23).